The chain runs to 205 residues: MAMQKLFTYIYEFIKYRKMVLLEEKVPYDKFVQMVLNTGFFRINAETLNHGIVSVFIFGANGKYVHHGGDMRTLLTNTLNEKKHYEELILIVDKPVLSKKNILDIIVEQRAANPTIVINIYPYHLFCINIPKVSAIPRHKLITQEEAQEFLGREYLQPQDLMQISASDPPVVWLGGRPGDFVQIERPSETAMHAVVIRFITKSKI.

It belongs to the archaeal RpoH/eukaryotic RPB5 RNA polymerase subunit family. As to quaternary structure, part of the viral DNA-directed RNA polymerase that consists of 8 polII-like subunits (RPB1, RPB2, RPB3, RPB5, RPB6, RPB7, RPB9, RPB10), a capping enzyme and a termination factor.

Its subcellular location is the host cytoplasm. It localises to the virion. Its function is as follows. Component of the DNA-directed RNA polymerase (RNAP) that catalyzes the transcription in the cytoplasm of viral DNA into RNA using the four ribonucleoside triphosphates as substrates. The polypeptide is DNA-directed RNA polymerase RPB5 homolog (Ornithodoros (relapsing fever ticks)).